Reading from the N-terminus, the 149-residue chain is Glutamyl-tRNA(Gln) amidotransferase subunit C, mitochondrial (149 aa).

This sequence belongs to the GatC family. In terms of assembly, subunit of the heterotrimeric GatCAB amidotransferase (AdT) complex, composed of A, B and C subunits.

It is found in the mitochondrion. The catalysed reaction is L-glutamyl-tRNA(Gln) + L-glutamine + ATP + H2O = L-glutaminyl-tRNA(Gln) + L-glutamate + ADP + phosphate + H(+). Functionally, allows the formation of correctly charged Gln-tRNA(Gln) through the transamidation of misacylated Glu-tRNA(Gln) in the mitochondria. The reaction takes place in the presence of glutamine and ATP through an activated gamma-phospho-Glu-tRNA(Gln). The polypeptide is Glutamyl-tRNA(Gln) amidotransferase subunit C, mitochondrial (Trichoplax adhaerens (Trichoplax reptans)).